The sequence spans 111 residues: Large ribosomal subunit protein uL22 (111 aa).

Belongs to the universal ribosomal protein uL22 family. As to quaternary structure, part of the 50S ribosomal subunit.

This protein binds specifically to 23S rRNA; its binding is stimulated by other ribosomal proteins, e.g. L4, L17, and L20. It is important during the early stages of 50S assembly. It makes multiple contacts with different domains of the 23S rRNA in the assembled 50S subunit and ribosome. Its function is as follows. The globular domain of the protein is located near the polypeptide exit tunnel on the outside of the subunit, while an extended beta-hairpin is found that lines the wall of the exit tunnel in the center of the 70S ribosome. This Protochlamydia amoebophila (strain UWE25) protein is Large ribosomal subunit protein uL22.